A 304-amino-acid polypeptide reads, in one-letter code: Cell surface-binding protein OPG105 (304 aa).

Residues 1 to 235 enclose the Alpha-carbonic anhydrase domain; the sequence is MPQQLSPINI…NDDTQVYYSG (235 aa). The Virion surface segment spans residues 1–275; it reads MPQQLSPINI…YQKYIEENKT (275 aa). Residues 276–294 traverse the membrane as a helical segment; sequence FAIIAIVFVFILTAILFFM. Residues 295–304 lie on the Intravirion side of the membrane; sequence SRRYSREKQN.

This sequence belongs to the alpha-carbonic anhydrase family. As to quaternary structure, homodimer; disulfide-linked. Post-translationally, apparently non-glycosylated.

The protein localises to the virion membrane. Its function is as follows. Binds to chondroitin sulfate on the cell surface to provide virion attachment to target cell. The sequence is that of Cell surface-binding protein OPG105 (OPG105) from Bos taurus (Bovine).